The primary structure comprises 555 residues: Neutral amino acid transporter B(0) (555 aa).

Methionine 1 carries the N-acetylmethionine modification. The Cytoplasmic portion of the chain corresponds to 1-52; sequence MAVDPPKADPKGVVAVDPTANCGSGLKSREDQGAKAGGCCSSRDQVCRCLRA. Residues 53–82 form a helical membrane-spanning segment; it reads NLLVLLTVAAAVAGVVLGLGVSAAGGAEAL. At 83-95 the chain is on the extracellular side; sequence GHARFTAFAFPGE. A helical transmembrane segment spans residues 96-117; the sequence is LLLRLLEMIILPLVVCSLIGGA. Over 118–131 the chain is Cytoplasmic; sequence ASLDPSALGRLGAW. The chain crosses the membrane as a helical span at residues 132-154; sequence ALLFFLVTTLLSSALGVALALAL. Residues 155-239 are Extracellular-facing; it reads KPGAAFAAIN…SNATMDQPHC (85 aa). Asparagine 164 and asparagine 231 each carry an N-linked (GlcNAc...) asparagine glycan. A helical membrane pass occupies residues 240 to 262; that stretch reads EMKMNILGLVVFAIVFGVALRKL. At 263 to 271 the chain is on the cytoplasmic side; it reads GPEGELLIR. The chain crosses the membrane as a helical span at residues 272 to 299; sequence FFNSFNDATMVLVSWIMWYAPIGILFLV. The Extracellular segment spans residues 300 to 320; that stretch reads AGKIVEMKDIRQLFIGLGKYI. Residues 321–342 form a helical membrane-spanning segment; sequence VCCLLGHAIHGLLVLPLIYFLF. Residues 343-347 lie on the Cytoplasmic side of the membrane; the sequence is TRKNP. Positions 348 to 378 form an intramembrane region, discontinuously helical; sequence YRFLWGIVTPLATAFGTSSSSATLPLMMKCV. The Cytoplasmic portion of the chain corresponds to 379–387; sequence EEKNGVAKH. Residues 388–414 form a helical membrane-spanning segment; that stretch reads ISRFILPIGATVNMDGAALFQCVAAVF. Na(+)-binding residues include glycine 396, threonine 398, and asparagine 400. Topologically, residues 415–427 are extracellular; sequence IAQLNGMSLDFVK. Positions 428-461 form an intramembrane region, discontinuously helical; it reads IITILVTATASSVGAAGIPAGGVLTLAIILEAIS. Topologically, residues 462–474 are extracellular; it reads LPVKDISLILAVD. A helical transmembrane segment spans residues 475 to 496; it reads WLVDRSCTVLNVEGDAFGAGLL. Asparagine 485 and aspartate 489 together coordinate Na(+). Residues 497–555 lie on the Cytoplasmic side of the membrane; it reads QSYVDRTKMPSSEPELIQVKNDVSLKPLPLATEEGNPLLKQCREPSGDSSATCEKESVM. 5 positions are modified to phosphoserine: serine 507, serine 508, serine 520, serine 545, and serine 553. Residues 534 to 555 are disordered; that stretch reads LLKQCREPSGDSSATCEKESVM.

The protein belongs to the dicarboxylate/amino acid:cation symporter (DAACS) (TC 2.A.23) family. As to quaternary structure, homotrimer.

The protein localises to the cell membrane. The protein resides in the melanosome. The catalysed reaction is L-glutamine(out) + L-serine(in) + Na(+)(out) = L-glutamine(in) + L-serine(out) + Na(+)(in). It carries out the reaction L-glutamine(in) + L-serine(out) + Na(+)(out) = L-glutamine(out) + L-serine(in) + Na(+)(in). It catalyses the reaction L-threonine(in) + L-glutamine(out) + Na(+)(out) = L-threonine(out) + L-glutamine(in) + Na(+)(in). The enzyme catalyses L-threonine(out) + L-glutamine(in) + Na(+)(out) = L-threonine(in) + L-glutamine(out) + Na(+)(in). The catalysed reaction is L-asparagine(in) + L-glutamine(out) + Na(+)(out) = L-asparagine(out) + L-glutamine(in) + Na(+)(in). It carries out the reaction L-asparagine(out) + L-glutamine(in) + Na(+)(out) = L-asparagine(in) + L-glutamine(out) + Na(+)(in). It catalyses the reaction L-glutamine(in) + L-alanine(out) + Na(+)(out) = L-glutamine(out) + L-alanine(in) + Na(+)(in). The enzyme catalyses L-valine(out) + L-glutamine(in) + Na(+)(out) = L-valine(in) + L-glutamine(out) + Na(+)(in). The catalysed reaction is L-glutamine(in) + L-methionine(out) + Na(+)(out) = L-glutamine(out) + L-methionine(in) + Na(+)(in). It carries out the reaction L-glutamine(in) + L-glutamate(out) + Na(+)(out) + H(+)(out) = L-glutamine(out) + L-glutamate(in) + Na(+)(in) + H(+)(in). It catalyses the reaction D-serine(in) + L-glutamine(out) + Na(+)(out) = D-serine(out) + L-glutamine(in) + Na(+)(in). The enzyme catalyses D-serine(in) + L-alanine(out) + Na(+)(out) = D-serine(out) + L-alanine(in) + Na(+)(in). The catalysed reaction is nitrate(in) = nitrate(out). It carries out the reaction iodide(out) = iodide(in). It catalyses the reaction thiocyanate(in) = thiocyanate(out). Its activity is regulated as follows. Down-regulated at acidic pH. In terms of biological role, sodium-coupled antiporter of neutral amino acids. In a tri-substrate transport cycle, exchanges neutral amino acids between the extracellular and intracellular compartments, coupled to the inward cotransport of at least one sodium ion. The preferred substrate is the essential amino acid L-glutamine, a precursor for biosynthesis of proteins, nucleotides and amine sugars as well as an alternative fuel for mitochondrial oxidative phosphorylation. Exchanges L-glutamine with other neutral amino acids such as L-serine, L-threonine and L-asparagine in a bidirectional way. Provides L-glutamine to proliferating stem and activated cells driving the metabolic switch toward cell differentiation. The transport cycle is usually pH-independent, with the exception of L-glutamate. Transports extracellular L-glutamate coupled to the cotransport of one proton and one sodium ion in exchange for intracellular L-glutamine counter-ion. May provide for L-glutamate uptake in glial cells regulating glutamine/glutamate cycle in the nervous system. Can transport D-amino acids. Mediates D-serine release from the retinal glia potentially affecting NMDA receptor function in retinal neurons. Displays sodium- and amino acid-dependent but uncoupled channel-like anion conductance with a preference SCN(-) &gt;&gt; NO3(-) &gt; I(-) &gt; Cl(-). Through binding of the fusogenic protein syncytin-1/ERVW-1 may mediate trophoblasts syncytialization, the spontaneous fusion of their plasma membranes, an essential process in placental development. The polypeptide is Neutral amino acid transporter B(0) (Slc1a5) (Rattus norvegicus (Rat)).